The following is a 101-amino-acid chain: Small ribosomal subunit protein uS14 (101 aa).

Belongs to the universal ribosomal protein uS14 family. Part of the 30S ribosomal subunit. Contacts proteins S3 and S10.

Functionally, binds 16S rRNA, required for the assembly of 30S particles and may also be responsible for determining the conformation of the 16S rRNA at the A site. This Paraburkholderia phymatum (strain DSM 17167 / CIP 108236 / LMG 21445 / STM815) (Burkholderia phymatum) protein is Small ribosomal subunit protein uS14.